Consider the following 39-residue polypeptide: Photosystem II reaction center protein L (39 aa).

A helical transmembrane segment spans residues Ser18 to Phe38.

It belongs to the PsbL family. PSII is composed of 1 copy each of membrane proteins PsbA, PsbB, PsbC, PsbD, PsbE, PsbF, PsbH, PsbI, PsbJ, PsbK, PsbL, PsbM, PsbT, PsbX, PsbY, PsbZ, Psb30/Ycf12, peripheral proteins PsbO, CyanoQ (PsbQ), PsbU, PsbV and a large number of cofactors. It forms dimeric complexes.

The protein localises to the cellular thylakoid membrane. In terms of biological role, one of the components of the core complex of photosystem II (PSII). PSII is a light-driven water:plastoquinone oxidoreductase that uses light energy to abstract electrons from H(2)O, generating O(2) and a proton gradient subsequently used for ATP formation. It consists of a core antenna complex that captures photons, and an electron transfer chain that converts photonic excitation into a charge separation. This subunit is found at the monomer-monomer interface and is required for correct PSII assembly and/or dimerization. The protein is Photosystem II reaction center protein L of Synechococcus sp. (strain CC9605).